Here is a 315-residue protein sequence, read N- to C-terminus: Probable cytochrome c oxidase subunit 2 (315 aa).

The region spanning 6 to 53 is the RPE1 insert domain; sequence RHLSKPAYREEFKGDTSPRTAAYISNRADASLGSTYKLPLEAKFWKMS. Transmembrane regions (helical) follow at residues 41–61, 96–116, and 133–153; these read YKLP…CFLI, LLYI…FVCI, and VLIE…IAVP. Cu cation is bound by residues His235, Cys270, Cys274, and His278.

Belongs to the cytochrome c oxidase subunit 2 family. It depends on Cu cation as a cofactor. Heme is required as a cofactor.

Its subcellular location is the cell membrane. It carries out the reaction 4 Fe(II)-[cytochrome c] + O2 + 8 H(+)(in) = 4 Fe(III)-[cytochrome c] + 2 H2O + 4 H(+)(out). Subunits I and II form the functional core of the enzyme complex. Electrons originating in cytochrome c are transferred via heme a and Cu(A) to the binuclear center formed by heme a3 and Cu(B). The polypeptide is Probable cytochrome c oxidase subunit 2 (ctaC) (Rickettsia felis (strain ATCC VR-1525 / URRWXCal2) (Rickettsia azadi)).